Here is a 190-residue protein sequence, read N- to C-terminus: Cytidylate kinase (190 aa).

7-15 (GKIGSGKST) contributes to the ATP binding site.

Belongs to the cytidylate kinase family. Type 2 subfamily.

The protein localises to the cytoplasm. The enzyme catalyses CMP + ATP = CDP + ADP. It carries out the reaction dCMP + ATP = dCDP + ADP. The protein is Cytidylate kinase of Thermoplasma volcanium (strain ATCC 51530 / DSM 4299 / JCM 9571 / NBRC 15438 / GSS1).